Reading from the N-terminus, the 322-residue chain is Carnosine N-methyltransferase 2 (322 aa).

E58 serves as a coordination point for substrate. S-adenosyl-L-methionine is bound by residues G90, E119, S150, and I172. Position 313 (N313) interacts with substrate.

The protein belongs to the class I-like SAM-binding methyltransferase superfamily. HNMT family. In terms of assembly, monomer.

It catalyses the reaction carnosine + S-adenosyl-L-methionine = anserine + S-adenosyl-L-homocysteine + H(+). Functionally, N-methyltransferase that mediates the formation of anserine (beta-alanyl-N(Pi)-methyl-L-histidine) from carnosine. Anserine, a methylated derivative of carnosine (beta-alanyl-L-histidine), is an abundant constituent of vertebrate skeletal muscles. In Gallus gallus (Chicken), this protein is Carnosine N-methyltransferase 2.